The chain runs to 98 residues: NADH-ubiquinone oxidoreductase chain 4L (98 aa).

Helical transmembrane passes span 1 to 21 (MPIIYMNIMLSFIISLLGMLI), 29 to 49 (SLLCLEGMMLSLFIMSTLMAL), and 58 to 78 (IVPVALLVFAACEAAVGLALL).

This sequence belongs to the complex I subunit 4L family. As to quaternary structure, core subunit of respiratory chain NADH dehydrogenase (Complex I) which is composed of 45 different subunits.

Its subcellular location is the mitochondrion inner membrane. It carries out the reaction a ubiquinone + NADH + 5 H(+)(in) = a ubiquinol + NAD(+) + 4 H(+)(out). Its function is as follows. Core subunit of the mitochondrial membrane respiratory chain NADH dehydrogenase (Complex I) which catalyzes electron transfer from NADH through the respiratory chain, using ubiquinone as an electron acceptor. Part of the enzyme membrane arm which is embedded in the lipid bilayer and involved in proton translocation. This Semnopithecus entellus (Northern plains gray langur) protein is NADH-ubiquinone oxidoreductase chain 4L (MT-ND4L).